The chain runs to 304 residues: Light-independent protochlorophyllide reductase iron-sulfur ATP-binding protein (304 aa).

ATP is bound by residues 46–51 and lysine 75; that span reads GIGKST. Mg(2+) is bound at residue serine 50. 2 residues coordinate [4Fe-4S] cluster: cysteine 131 and cysteine 165. Residues 216–217 and 240–242 contribute to the ATP site; these read NR and PDL.

It belongs to the NifH/BchL/ChlL family. Homodimer. Protochlorophyllide reductase is composed of three subunits; BchL, BchN and BchB. The cofactor is [4Fe-4S] cluster.

The enzyme catalyses chlorophyllide a + oxidized 2[4Fe-4S]-[ferredoxin] + 2 ADP + 2 phosphate = protochlorophyllide a + reduced 2[4Fe-4S]-[ferredoxin] + 2 ATP + 2 H2O. The protein operates within porphyrin-containing compound metabolism; bacteriochlorophyll biosynthesis (light-independent). In terms of biological role, component of the dark-operative protochlorophyllide reductase (DPOR) that uses Mg-ATP and reduced ferredoxin to reduce ring D of protochlorophyllide (Pchlide) to form chlorophyllide a (Chlide). This reaction is light-independent. The L component serves as a unique electron donor to the NB-component of the complex, and binds Mg-ATP. The chain is Light-independent protochlorophyllide reductase iron-sulfur ATP-binding protein from Rhodobacter capsulatus (strain ATCC BAA-309 / NBRC 16581 / SB1003).